The primary structure comprises 238 residues: 5'-deoxynucleotidase YBR242W (238 aa).

The region spanning 77-183 is the HD domain; that stretch reads ISDHMYRLSI…VKDIDKYEML (107 aa). A divalent metal cation-binding residues include His-80, His-108, Asp-109, Glu-112, Asp-117, Ile-118, and Asp-178.

This sequence belongs to the HDDC2 family. Homodimer. The cofactor is Mn(2+). Co(2+) serves as cofactor. Requires Mg(2+) as cofactor.

It catalyses the reaction a 2'-deoxyribonucleoside 5'-phosphate + H2O = a 2'-deoxyribonucleoside + phosphate. Its function is as follows. Catalyzes the dephosphorylation of the nucleoside 5'-monophosphates deoxyadenosine monophosphate (dAMP), deoxycytidine monophosphate (dCMP), deoxyguanosine monophosphate (dGMP) and deoxythymidine monophosphate (dTMP). This is 5'-deoxynucleotidase YBR242W from Saccharomyces cerevisiae (strain ATCC 204508 / S288c) (Baker's yeast).